The following is a 194-amino-acid chain: Endoribonuclease YbeY (194 aa).

3 residues coordinate Zn(2+): His127, His131, and Asp137. The interval 162–194 is disordered; the sequence is PLSNDEDSAPEQDDSFDDDASDSSGGIMSGGVS. The span at 165–182 shows a compositional bias: acidic residues; the sequence is NDEDSAPEQDDSFDDDAS.

The protein belongs to the endoribonuclease YbeY family. Zn(2+) serves as cofactor.

Its subcellular location is the cytoplasm. In terms of biological role, single strand-specific metallo-endoribonuclease involved in late-stage 70S ribosome quality control and in maturation of the 3' terminus of the 16S rRNA. This is Endoribonuclease YbeY from Rhodopirellula baltica (strain DSM 10527 / NCIMB 13988 / SH1).